The chain runs to 220 residues: Probable N-acetyl-alpha-D-glucosaminyl L-malate deacetylase 2 (220 aa).

Positions 11, 14, and 125 each coordinate Zn(2+).

It belongs to the PIGL family. Requires Zn(2+) as cofactor.

The catalysed reaction is (S)-malyl N-acetyl-alpha-D-glucosaminide + H2O = (S)-malyl alpha-D-glucosaminide + acetate. Involved in bacillithiol (BSH) biosynthesis. Catalyzes the second step of the pathway, the deacetylation of N-acetylglucosaminylmalate (GlcNAc-Mal) to glucosamine malate (GlcN-Mal). Has weak activity compared with bshB1. This Bacillus cereus (strain ATCC 14579 / DSM 31 / CCUG 7414 / JCM 2152 / NBRC 15305 / NCIMB 9373 / NCTC 2599 / NRRL B-3711) protein is Probable N-acetyl-alpha-D-glucosaminyl L-malate deacetylase 2.